The sequence spans 715 residues: Lactococcin transport/processing ATP-binding protein LcnC-like (715 aa).

The 128-residue stretch at 11-138 (QVDEMDCGCA…SEWTGISLFL (128 aa)) folds into the Peptidase C39 domain. Residue cysteine 17 is part of the active site. The next 5 membrane-spanning stretches (helical) occupy residues 167-187 (VILNIVIASFIVTLINILGSY), 197-217 (IPNALMGTLGIISVGLLLTYI), 237-257 (LAIDVILSYIRHIFQLPMSFF), 282-302 (TILSLFLDLTIVLMTGLILGL), and 307-327 (LFLLVLLAIPLYIVVIIIFTP). In terms of domain architecture, ABC transmembrane type-1 spans 168-450 (ILNIVIASFI…IINLQTKLQK (283 aa)). Positions 482-715 (LNMSEISYQY…NGFYAQLYHN (234 aa)) constitute an ABC transporter domain. 515-522 (GISGSGKS) is a binding site for ATP.

It belongs to the ABC transporter superfamily. HlyB family.

It localises to the cell membrane. Functionally, involved in the export process of a bacteriocin lactococcin. This chain is Lactococcin transport/processing ATP-binding protein LcnC-like (lcnC), found in Lactococcus lactis subsp. lactis (strain IL1403) (Streptococcus lactis).